We begin with the raw amino-acid sequence, 319 residues long: DNA-directed RNA polymerases II, IV and V subunit 3 (319 aa).

An N-acetylmethionine modification is found at M1.

The protein belongs to the archaeal Rpo3/eukaryotic RPB3 RNA polymerase subunit family. In terms of assembly, component of the RNA polymerase II complex consisting of at least 12 subunits. Interacts with SHH1, CLSY1, NRPB11 and NRPD1. Interacts with IYO.

The protein localises to the nucleus. DNA-dependent RNA polymerase catalyzes the transcription of DNA into RNA using the four ribonucleoside triphosphates as substrates. Component of RNA polymerase II which synthesizes mRNA precursors and many functional non-coding RNAs. Pol II is the central component of the basal RNA polymerase II transcription machinery. It is composed of mobile elements that move relative to each other. NRPB3 is part of the core element with the central large cleft and the clamp element that moves to open and close the cleft. Component of RNA polymerases IV and V which mediate short-interfering RNAs (siRNA) accumulation and subsequent RNA-directed DNA methylation-dependent (RdDM) transcriptional gene silencing (TGS) of endogenous repeated sequences, including transposable elements. This Arabidopsis thaliana (Mouse-ear cress) protein is DNA-directed RNA polymerases II, IV and V subunit 3 (NRPB3).